The following is a 1140-amino-acid chain: Envelopment polyprotein (1140 aa).

The signal sequence occupies residues Met-1 to Ala-17. The Lumenal portion of the chain corresponds to Gly-18–Val-480. 6 cysteine pairs are disulfide-bonded: Cys-30/Cys-155, Cys-64/Cys-161, Cys-113/Cys-132, Cys-137/Cys-142, Cys-179/Cys-189, and Cys-214/Cys-251. Asn-138 carries N-linked (GlcNAc...) asparagine; by host glycosylation. Asn-351 is a glycosylation site (N-linked (GlcNAc...) asparagine; by host). Disulfide bonds link Cys-380-Cys-439, Cys-384-Cys-393, Cys-409-Cys-428, and Cys-456-Cys-479. Residue Asn-403 is glycosylated (N-linked (GlcNAc...) asparagine; by host). A helical transmembrane segment spans residues Ala-490–Leu-510. At Lys-511–Cys-631 the chain is on the cytoplasmic side. Positions Cys-520–Lys-537 are binding to the ribonucleoprotein. 2 CCHC-type zinc fingers span residues Cys-549–Cys-569 and Cys-574–Cys-595. Binding to the ribonucleoprotein stretches follow at residues Phe-592 to Leu-609, Lys-596 to Lys-607, and Arg-615 to Ser-629. Residues Arg-615–Gly-638 enclose the ITAM domain. A phosphotyrosine mark is found at Tyr-619 and Tyr-632. The YxxL signature appears at Tyr-619–Leu-622. A helical transmembrane segment spans residues Tyr-632–Ala-652. Topologically, residues Asp-653 to Asn-1108 are lumenal. Cystine bridges form between Cys-739–Cys-774, Cys-743–Cys-781, Cys-755–Cys-888, Cys-769–Cys-899, Cys-784–Cys-907, Cys-810–Cys-819, Cys-827–Cys-836, and Cys-867–Cys-871. Residues Tyr-761–Cys-781 form a fusion loop region. Asn-931 carries an N-linked (GlcNAc...) asparagine; by host glycan. Intrachain disulfides connect Cys-973–Cys-1003, Cys-996–Cys-1048, Cys-1013–Cys-1018, Cys-1049–Cys-1054, and Cys-1088–Cys-1092. The chain crosses the membrane as a helical span at residues Trp-1109–Phe-1129. Residues Leu-1125–Asn-1140 form a binding to the ribonucleoprotein region. At Cys-1130–Asn-1140 the chain is on the cytoplasmic side.

This sequence belongs to the hantavirus envelope glycoprotein family. Homodimer. Homotetramer; forms heterotetrameric Gn-Gc spikes in the pre-fusion conformation. Interacts (via C-terminus) with the nucleoprotein. Interacts with host TUFM; this interaction contributes to the virus-induced degradation of mitochondria by autophagy, which leads to degradation of host MAVS and inhibition of type I interferon (IFN) responses. Interacts with host MAP1LC3B; this interaction contributes to the virus-induced degradation of mitochondria by autophagy, which leads to degradation of host MAVS and inhibition of type I interferon (IFN) responses. In terms of assembly, homodimer. Homotetramer; forms heterotetrameric Gn-Gc spikes in the pre-fusion conformation. Homotrimer; forms homotrimer in the post-fusion conformation at acidic pH. Interacts (via C-terminus) with the nucleoprotein. Post-translationally, envelope polyprotein precursor is quickly cleaved in vivo just after synthesis, presumably by host signal peptidase.

It localises to the virion membrane. The protein resides in the host cell surface. The protein localises to the host Golgi apparatus membrane. Its subcellular location is the host endoplasmic reticulum membrane. It is found in the host mitochondrion. Forms homotetramers with glycoprotein C at the surface of the virion. Attaches the virion to host cell receptors including integrin ITGAV/ITGB3. This attachment induces virion internalization predominantly through clathrin-dependent endocytosis. Mediates the assembly and budding of infectious virus particles through its interaction with the nucleocapsid protein and the viral genome. May dysregulate normal immune and endothelial cell responses through an ITAM motif. Translocates to mitochondria, binds to host TUFM and recruits MAP1LC3B. These interactions induce mitochondrial autophagy and therefore destruction of host MAVS leading to inhibition of type I interferon (IFN) responses. Concomitant breakdown of glycoprotein N is apparently prevented by the nucleoprotein that may inhibit Gn-stimulated autophagosome-lysosome fusion. Interacts with the viral genomic RNA. Functionally, forms homotetramers with glycoprotein N at the surface of the virion. Attaches the virion to host cell receptors including integrin ITGAV/ITGB3. This attachment induces virion internalization predominantly through clathrin-dependent endocytosis. Class II fusion protein that promotes fusion of viral membrane with host endosomal membrane after endocytosis of the virion. The polypeptide is Envelopment polyprotein (GP) (Sin Nombre orthohantavirus (SNV)).